A 479-amino-acid polypeptide reads, in one-letter code: Probable phosphatidate cytidylyltransferase (479 aa).

Over residues 1 to 28 the composition is skewed to basic and acidic residues; the sequence is MRTDNIRNRKEQLKKQEKKDFDSSKDEE. The segment at 1-71 is disordered; that stretch reads MRTDNIRNRK…NNNNNNNNIK (71 aa). At 1–108 the chain is on the cytoplasmic side; sequence MRTDNIRNRK…LAIRSVMGAF (108 aa). Low complexity predominate over residues 53–69; that stretch reads NKNIINQKTNNNNNNNN. Residues 109 to 129 form a helical membrane-spanning segment; that stretch reads MIGFFTIVLSTDHFIVALFVI. At 130–159 the chain is on the extracellular side; it reads ALQLLVFKEMIALRYIEAKEKKIPHFRTLN. Residues 160–180 form a helical membrane-spanning segment; sequence WFFLFTSFFFFYAKPILITLA. Over 181-192 the chain is Cytoplasmic; that stretch reads NYYPDIFQHFVR. The chain crosses the membrane as a helical span at residues 193–213; that stretch reads YHLWHSFSLYCIGFVLFILTL. Over 214-240 the chain is Extracellular; that stretch reads RKGVYRYQFSQLTWTLMILMMVVVQSN. A helical membrane pass occupies residues 241–261; that stretch reads FLISNIYQGLIWFILPVSIIV. At 262–293 the chain is on the cytoplasmic side; that stretch reads CNDIFAYFNGFFLGKKFINRPLMKISPNKTWE. A helical transmembrane segment spans residues 294–314; sequence GFIGATGWTLLFAYYFCGFLL. Residues 315–375 are Extracellular-facing; it reads KYDWIVCPKG…FTYIPIQFHA (61 aa). A helical transmembrane segment spans residues 376–396; it reads LVLALFGSLIAPFGGFFASGI. The Cytoplasmic portion of the chain corresponds to 397 to 479; that stretch reads KRAYKVKDFD…IEFTTGTITA (83 aa).

The protein belongs to the CDS family.

The protein localises to the membrane. It catalyses the reaction a 1,2-diacyl-sn-glycero-3-phosphate + CTP + H(+) = a CDP-1,2-diacyl-sn-glycerol + diphosphate. It participates in phospholipid metabolism; CDP-diacylglycerol biosynthesis; CDP-diacylglycerol from sn-glycerol 3-phosphate: step 3/3. The polypeptide is Probable phosphatidate cytidylyltransferase (cdsA) (Dictyostelium discoideum (Social amoeba)).